We begin with the raw amino-acid sequence, 176 residues long: 3-hydroxyanthranilate 3,4-dioxygenase (176 aa).

O2 is bound at residue Arg44. Positions 48, 54, and 92 each coordinate Fe cation. Glu54 serves as a coordination point for substrate. Substrate is bound by residues Arg96 and Glu106. Fe cation is bound by residues Cys121, Cys124, Cys158, and Cys161.

Belongs to the 3-HAO family. Homodimer. Fe(2+) serves as cofactor.

The enzyme catalyses 3-hydroxyanthranilate + O2 = (2Z,4Z)-2-amino-3-carboxymuconate 6-semialdehyde. It functions in the pathway cofactor biosynthesis; NAD(+) biosynthesis; quinolinate from L-kynurenine: step 3/3. Functionally, catalyzes the oxidative ring opening of 3-hydroxyanthranilate to 2-amino-3-carboxymuconate semialdehyde, which spontaneously cyclizes to quinolinate. The protein is 3-hydroxyanthranilate 3,4-dioxygenase of Xanthomonas campestris pv. campestris (strain B100).